We begin with the raw amino-acid sequence, 157 residues long: 3-dehydroquinate dehydratase (157 aa).

The Proton acceptor role is filled by Y24. Residues N75, H81, and D88 each contribute to the substrate site. H101 serves as the catalytic Proton donor. Substrate-binding positions include 102–103 and R112; that span reads LS.

The protein belongs to the type-II 3-dehydroquinase family. As to quaternary structure, homododecamer.

It carries out the reaction 3-dehydroquinate = 3-dehydroshikimate + H2O. The protein operates within metabolic intermediate biosynthesis; chorismate biosynthesis; chorismate from D-erythrose 4-phosphate and phosphoenolpyruvate: step 3/7. Its function is as follows. Catalyzes a trans-dehydration via an enolate intermediate. The polypeptide is 3-dehydroquinate dehydratase (Brucella melitensis biotype 1 (strain ATCC 23456 / CCUG 17765 / NCTC 10094 / 16M)).